A 467-amino-acid polypeptide reads, in one-letter code: 3-isopropylmalate dehydratase large subunit (467 aa).

Positions 348, 409, and 412 each coordinate [4Fe-4S] cluster.

Belongs to the aconitase/IPM isomerase family. LeuC type 1 subfamily. Heterodimer of LeuC and LeuD. [4Fe-4S] cluster is required as a cofactor.

It catalyses the reaction (2R,3S)-3-isopropylmalate = (2S)-2-isopropylmalate. It participates in amino-acid biosynthesis; L-leucine biosynthesis; L-leucine from 3-methyl-2-oxobutanoate: step 2/4. Catalyzes the isomerization between 2-isopropylmalate and 3-isopropylmalate, via the formation of 2-isopropylmaleate. The polypeptide is 3-isopropylmalate dehydratase large subunit (Magnetococcus marinus (strain ATCC BAA-1437 / JCM 17883 / MC-1)).